Reading from the N-terminus, the 328-residue chain is UPF0285 protein Mevan_1551 (328 aa).

Belongs to the UPF0285 family.

The protein is UPF0285 protein Mevan_1551 of Methanococcus vannielii (strain ATCC 35089 / DSM 1224 / JCM 13029 / OCM 148 / SB).